Reading from the N-terminus, the 253-residue chain is Claudin domain-containing protein 1 (253 aa).

Residues F5–A25 form a helical membrane-spanning segment. N-linked (GlcNAc...) asparagine glycosylation is found at N42 and N72. The next 3 helical transmembrane spans lie at F141–A161, I175–I195, and F216–A236.

The protein belongs to the PMP-22/EMP/MP20 family. Widely distributed in the adult CNS with highest expression in the corpus callosum, caudate nucleus, cerebral cortex, medulla, putamen, spinal cord, substantia nigra and subthalamic nucleus. Weak expression was detected in the adult heart.

It is found in the cell junction. Its subcellular location is the tight junction. The protein localises to the cell membrane. In terms of biological role, plays a role in negatively regulating the permeability of cells to small molecules. This Homo sapiens (Human) protein is Claudin domain-containing protein 1 (CLDND1).